The following is a 370-amino-acid chain: Glutamate 5-kinase (370 aa).

Lys17 provides a ligand contact to ATP. Residues Ser56, Asp143, and Asn155 each coordinate substrate. Residue Ser175 to Asp176 participates in ATP binding. The PUA domain occupies Arg280–Ser357.

Belongs to the glutamate 5-kinase family.

Its subcellular location is the cytoplasm. It catalyses the reaction L-glutamate + ATP = L-glutamyl 5-phosphate + ADP. It functions in the pathway amino-acid biosynthesis; L-proline biosynthesis; L-glutamate 5-semialdehyde from L-glutamate: step 1/2. In terms of biological role, catalyzes the transfer of a phosphate group to glutamate to form L-glutamate 5-phosphate. This is Glutamate 5-kinase from Cereibacter sphaeroides (strain ATCC 17023 / DSM 158 / JCM 6121 / CCUG 31486 / LMG 2827 / NBRC 12203 / NCIMB 8253 / ATH 2.4.1.) (Rhodobacter sphaeroides).